A 121-amino-acid chain; its full sequence is Large ribosomal subunit protein bL20 (121 aa).

This sequence belongs to the bacterial ribosomal protein bL20 family.

In terms of biological role, binds directly to 23S ribosomal RNA and is necessary for the in vitro assembly process of the 50S ribosomal subunit. It is not involved in the protein synthesizing functions of that subunit. The protein is Large ribosomal subunit protein bL20 of Mycoplasma mycoides subsp. mycoides SC (strain CCUG 32753 / NCTC 10114 / PG1).